The chain runs to 380 residues: WAT1-related protein At2g37460 (380 aa).

The next 10 helical transmembrane spans lie at 16-36, 45-65, 71-91, 107-127, 142-162, 187-207, 216-236, 254-274, 282-302, and 306-326; these read FISMVVLQVGLAGMDILSKAV, VLVVYRHAVATIVMAPFAFYF, PKMTLMIFFKISLLGLLEPVI, FATAMYNVLPAITFVLAYIFG, VVGTLATVGGAMIMTLVKGPV, GAVLVTIGCFSYACFMILQAI, LSLTAWICLMGTIEGTAVALV, LTATYSGIVCSALAYYVGGVV, FVTAFSPLCMIIVAIMSTIIF, and MYLGRVLGAVVICAGLYLVIW. Positions 27-134 constitute an EamA 1 domain; it reads AGMDILSKAV…IFGLERVKLR (108 aa). In terms of domain architecture, EamA 2 spans 196-325; that stretch reads FSYACFMILQ…VICAGLYLVI (130 aa).

Belongs to the drug/metabolite transporter (DMT) superfamily. Plant drug/metabolite exporter (P-DME) (TC 2.A.7.4) family.

The protein resides in the membrane. This is WAT1-related protein At2g37460 from Arabidopsis thaliana (Mouse-ear cress).